Here is a 302-residue protein sequence, read N- to C-terminus: Aspartate carbamoyltransferase catalytic subunit (302 aa).

Carbamoyl phosphate contacts are provided by R53 and T54. Residue K82 coordinates L-aspartate. Carbamoyl phosphate is bound by residues R103, H131, and Q134. 2 residues coordinate L-aspartate: R164 and R223. Carbamoyl phosphate contacts are provided by L260 and P261.

It belongs to the aspartate/ornithine carbamoyltransferase superfamily. ATCase family. Heterooligomer of catalytic and regulatory chains.

The enzyme catalyses carbamoyl phosphate + L-aspartate = N-carbamoyl-L-aspartate + phosphate + H(+). The protein operates within pyrimidine metabolism; UMP biosynthesis via de novo pathway; (S)-dihydroorotate from bicarbonate: step 2/3. Its function is as follows. Catalyzes the condensation of carbamoyl phosphate and aspartate to form carbamoyl aspartate and inorganic phosphate, the committed step in the de novo pyrimidine nucleotide biosynthesis pathway. In Methanococcus maripaludis (strain C5 / ATCC BAA-1333), this protein is Aspartate carbamoyltransferase catalytic subunit.